Here is a 512-residue protein sequence, read N- to C-terminus: Serine palmitoyltransferase 3 (512 aa).

Lys345 is subject to N6-(pyridoxal phosphate)lysine.

It belongs to the class-II pyridoxal-phosphate-dependent aminotransferase family. Heterodimer of sptl-1/sptl-3. It depends on pyridoxal 5'-phosphate as a cofactor.

It carries out the reaction L-serine + hexadecanoyl-CoA + H(+) = 3-oxosphinganine + CO2 + CoA. Its pathway is lipid metabolism; sphingolipid metabolism. In terms of biological role, component of the serine palmitoyltransferase (SPT) that catalyzes the first committed step in sphingolipid biosynthesis, which is the condensation of an acyl-CoA species and L-serine. The catalytic core is composed of a heterodimer of sptl-1 and sptl-2 or sptl-1 and sptl-3. Required for the specification of abicobasal polarity and development of the gut lumen. In Caenorhabditis elegans, this protein is Serine palmitoyltransferase 3 (sptl-3).